We begin with the raw amino-acid sequence, 315 residues long: Acetyl-coenzyme A carboxylase carboxyl transferase subunit alpha (315 aa).

The region spanning 32 to 293 (NISDEIARLQ…RADLVQQLDM (262 aa)) is the CoA carboxyltransferase C-terminal domain.

This sequence belongs to the AccA family. In terms of assembly, acetyl-CoA carboxylase is a heterohexamer composed of biotin carboxyl carrier protein (AccB), biotin carboxylase (AccC) and two subunits each of ACCase subunit alpha (AccA) and ACCase subunit beta (AccD).

It is found in the cytoplasm. It carries out the reaction N(6)-carboxybiotinyl-L-lysyl-[protein] + acetyl-CoA = N(6)-biotinyl-L-lysyl-[protein] + malonyl-CoA. It functions in the pathway lipid metabolism; malonyl-CoA biosynthesis; malonyl-CoA from acetyl-CoA: step 1/1. Component of the acetyl coenzyme A carboxylase (ACC) complex. First, biotin carboxylase catalyzes the carboxylation of biotin on its carrier protein (BCCP) and then the CO(2) group is transferred by the carboxyltransferase to acetyl-CoA to form malonyl-CoA. The chain is Acetyl-coenzyme A carboxylase carboxyl transferase subunit alpha from Pseudomonas putida (strain ATCC 47054 / DSM 6125 / CFBP 8728 / NCIMB 11950 / KT2440).